Reading from the N-terminus, the 217-residue chain is UPF0502 protein VF_A0604 (217 aa).

This sequence belongs to the UPF0502 family.

In Aliivibrio fischeri (strain ATCC 700601 / ES114) (Vibrio fischeri), this protein is UPF0502 protein VF_A0604.